A 305-amino-acid polypeptide reads, in one-letter code: Dihydroorotate dehydrogenase A (fumarate) (305 aa).

FMN contacts are provided by residues Ser21 and Lys45–Ser46. Residues Lys45, Asn69–Leu73, and Asn129 contribute to the substrate site. Residue Asn129 participates in FMN binding. The active-site Nucleophile is the Cys132. Residues Lys167 and Ile193 each coordinate FMN. Asn194 to Thr195 serves as a coordination point for substrate. FMN is bound by residues Gly219 and Gly245–Gly246.

It belongs to the dihydroorotate dehydrogenase family. Type 1 subfamily. Homodimer. The cofactor is FMN.

It is found in the cytoplasm. It carries out the reaction (S)-dihydroorotate + fumarate = orotate + succinate. It participates in pyrimidine metabolism; UMP biosynthesis via de novo pathway. Catalyzes the conversion of dihydroorotate to orotate with fumarate as the electron acceptor. This is Dihydroorotate dehydrogenase A (fumarate) (pyrD) from Lactiplantibacillus plantarum (strain ATCC BAA-793 / NCIMB 8826 / WCFS1) (Lactobacillus plantarum).